The following is a 336-amino-acid chain: Nicotinate-nucleotide--dimethylbenzimidazole phosphoribosyltransferase (336 aa).

The tract at residues 20-41 (GPDAAARAGAEERNGQLTKPPG) is disordered. Glu304 acts as the Proton acceptor in catalysis.

It belongs to the CobT family.

The enzyme catalyses 5,6-dimethylbenzimidazole + nicotinate beta-D-ribonucleotide = alpha-ribazole 5'-phosphate + nicotinate + H(+). The protein operates within nucleoside biosynthesis; alpha-ribazole biosynthesis; alpha-ribazole from 5,6-dimethylbenzimidazole: step 1/2. Functionally, catalyzes the synthesis of alpha-ribazole-5'-phosphate from nicotinate mononucleotide (NAMN) and 5,6-dimethylbenzimidazole (DMB). The protein is Nicotinate-nucleotide--dimethylbenzimidazole phosphoribosyltransferase of Ruegeria pomeroyi (strain ATCC 700808 / DSM 15171 / DSS-3) (Silicibacter pomeroyi).